The chain runs to 258 residues: Isoprenyl transferase (258 aa).

D24 is an active-site residue. Position 24 (D24) interacts with Mg(2+). Residues 25–28 (GNGR), W29, R37, H41, and 69–71 (SSE) each bind substrate. N72 functions as the Proton acceptor in the catalytic mechanism. Substrate contacts are provided by residues W73, R75, R190, and 196 to 198 (RIS). E209 serves as a coordination point for Mg(2+).

It belongs to the UPP synthase family. As to quaternary structure, homodimer. Mg(2+) serves as cofactor.

Functionally, catalyzes the condensation of isopentenyl diphosphate (IPP) with allylic pyrophosphates generating different type of terpenoids. In Ralstonia nicotianae (strain ATCC BAA-1114 / GMI1000) (Ralstonia solanacearum), this protein is Isoprenyl transferase.